A 426-amino-acid polypeptide reads, in one-letter code: 6-Hydroxy-7-prenyldeoxybrevianamide E synthase notC (426 aa).

Glu94 provides a ligand contact to substrate. Positions 105, 191, and 193 each coordinate dimethylallyl diphosphate. Tyr195 is a substrate binding site. Dimethylallyl diphosphate-binding residues include Lys267, Tyr269, Gln352, Tyr354, Tyr418, and Tyr422.

It belongs to the tryptophan dimethylallyltransferase family.

It catalyses the reaction 6-hydroxydeoxybrevianamide E + dimethylallyl diphosphate = notoamide S + diphosphate. The protein operates within alkaloid biosynthesis. Addition of 5 mM Mg(2+), Ca(2+) or Mn(2+) slightly enhances catalysis (about 100-120%). Significant reduction of enzyme activity (2%-35%) is observed with Cu(2+), Zn(2+), Fe(2+), or Sn(2+) (5 mM). In terms of biological role, prenyltransferase; part of the gene cluster that mediates the biosynthesis of notoamide, a fungal indole alkaloid that belongs to a family of natural products containing a characteristic bicyclo[2.2.2]diazaoctane core. The first step of notoamide biosynthesis involves coupling of L-proline and L-tryptophan by the bimodular NRPS notE, to produce cyclo-L-tryptophan-L-proline called brevianamide F. The reverse prenyltransferase notF then acts as a deoxybrevianamide E synthase and converts brevianamide F to deoxybrevianamide E via reverse prenylation at C-2 of the indole ring leading to the bicyclo[2.2.2]diazaoctane core. Deoxybrevianamide E is further hydroxylated at C-6 of the indole ring, likely catalyzed by the cytochrome P450 monooxygenase notG, to yield 6-hydroxy-deoxybrevianamide E. 6-hydroxy-deoxybrevianamide E is a specific substrate of the prenyltransferase notC for normal prenylation at C-7 to produce 6-hydroxy-7-prenyl-deoxybrevianamide, also called notoamide S. As the proposed pivotal branching point in notoamide biosynthesis, notoamide S can be diverted to notoamide E through an oxidative pyran ring closure putatively catalyzed by either notH cytochrome P450 monooxygenase or the notD FAD-linked oxidoreductase. This step would be followed by an indole 2,3-epoxidation-initiated pinacol-like rearrangement catalyzed by the notB FAD-dependent monooxygenase leading to the formation of notoamide C and notoamide D. On the other hand notoamide S is converted to notoamide T by notH (or notD), a bifunctional oxidase that also functions as the intramolecular Diels-Alderase responsible for generation of (+)-notoamide T. To generate antipodal (-)-notoaminide T, notH' (or notD') in Aspergillus versicolor is expected to catalyze a Diels-Alder reaction leading to the opposite stereochemistry. The remaining oxidoreductase notD (or notH) likely catalyzes the oxidative pyran ring formation to yield (+)-stephacidin A. The FAD-dependent monooxygenase notI is highly similar to notB and is predicted to catalyze a similar conversion from (+)-stephacidin A to (-)-notoamide B via the 2,3-epoxidation of (+)-stephacidin A followed by a pinacol-type rearrangement. Finally, it remains unclear which enzyme could be responsible for the final hydroxylation steps leading to notoamide A and sclerotiamide. The protein is 6-Hydroxy-7-prenyldeoxybrevianamide E synthase notC of Aspergillus sp. (strain MF297-2).